A 228-amino-acid chain; its full sequence is Flagellar L-ring protein (228 aa).

A signal peptide spans 1 to 26; sequence MAHFMKPSFSAMLIAVTVLAVSPLHA.

The protein belongs to the FlgH family. In terms of assembly, the basal body constitutes a major portion of the flagellar organelle and consists of four rings (L,P,S, and M) mounted on a central rod.

Its subcellular location is the cell outer membrane. The protein localises to the bacterial flagellum basal body. Its function is as follows. Assembles around the rod to form the L-ring and probably protects the motor/basal body from shearing forces during rotation. This Zymomonas mobilis subsp. mobilis (strain ATCC 31821 / ZM4 / CP4) protein is Flagellar L-ring protein (flgH).